We begin with the raw amino-acid sequence, 420 residues long: Gamma-glutamyl phosphate reductase (420 aa).

It belongs to the gamma-glutamyl phosphate reductase family.

The protein resides in the cytoplasm. The enzyme catalyses L-glutamate 5-semialdehyde + phosphate + NADP(+) = L-glutamyl 5-phosphate + NADPH + H(+). The protein operates within amino-acid biosynthesis; L-proline biosynthesis; L-glutamate 5-semialdehyde from L-glutamate: step 2/2. Catalyzes the NADPH-dependent reduction of L-glutamate 5-phosphate into L-glutamate 5-semialdehyde and phosphate. The product spontaneously undergoes cyclization to form 1-pyrroline-5-carboxylate. This Neisseria gonorrhoeae (strain ATCC 700825 / FA 1090) protein is Gamma-glutamyl phosphate reductase.